The following is a 266-amino-acid chain: Dolichol-phosphate mannosyltransferase subunit 1 (266 aa).

Positions 1–19 (MASPGASRGASAATAAAAS) are enriched in low complexity. Positions 1 to 31 (MASPGASRGASAATAAAASPRPPQGRSSRRD) are disordered. Alanine 2 carries the N-acetylalanine modification. Serine 3 is subject to Phosphoserine. Proline 38, tyrosine 40, glutamate 42, isoleucine 69, aspartate 71, aspartate 124, alanine 125, aspartate 126, arginine 153, arginine 240, and lysine 246 together coordinate GDP-alpha-D-mannose. Aspartate 126 is a binding site for Mg(2+). Aspartate 126 serves as a coordination point for Mn(2+).

Belongs to the glycosyltransferase 2 family. Component of the dolichol-phosphate mannose (DPM) synthase complex composed of DPM1, DPM2 and DPM3; within the complex, directly interacts with DPM3. This interaction may stabilize DPM1. Mg(2+) serves as cofactor. The cofactor is Mn(2+). Ca(2+) is required as a cofactor.

It localises to the endoplasmic reticulum. It catalyses the reaction a di-trans,poly-cis-dolichyl phosphate + GDP-alpha-D-mannose = a di-trans,poly-cis-dolichyl beta-D-mannosyl phosphate + GDP. It participates in protein modification; protein glycosylation. Transfers mannose from GDP-mannose to dolichol monophosphate to form dolichol phosphate mannose (Dol-P-Man) which is the mannosyl donor in pathways leading to N-glycosylation, glycosyl phosphatidylinositol membrane anchoring, and O-mannosylation of proteins; catalytic subunit of the dolichol-phosphate mannose (DPM) synthase complex. In Cricetulus griseus (Chinese hamster), this protein is Dolichol-phosphate mannosyltransferase subunit 1 (DPM1).